A 1755-amino-acid polypeptide reads, in one-letter code: MESQQLSQHSPNSHGSACASVTSKEVHTNQDPLDVSASKTEECEKASTKANSQQTTTPASSAVPENPHHASPQPASVPPPQNGPYPQQCMMTQNQANPSGWSFYGHPSMIPYTPYQMSPMYFPPGPQSQFPQYPSSVGTPLSTPSPESGNTFTDSSSADSDMTSTKKYVRPPPMLTSPNDFPNWVKTYIKFLQNSNLGGIIPTVNGKPVRQITDDELTFLYNTFQIFAPSQFLPTWVKDILSVDYTDIMKILSKSIEKMQSDTQEANDIVTLANLQYNGSTPADAFETKVTNIIDRLNNNGIHINNKVACQLIMRGLSGEYKFLRYTRHRHLNMTVAELFLDIHAIYEEQQGSRNSKPNYRRNPSDEKNDSRSYTNTTKPKVIARNPQKTNNSKSKTARAHNVSTSNNSPSTDNDSISKSTTEPIQLNNKHDLHLGQKLTESTVNHTNHSDDELPGHLLLDSGASRTLIRSAHHIHSASSNPDINVVDAQKRNIPINAIGDLQFHFQDNTKTSIKVLHTPNIAYDLLSLNELAAVDITACFTKNVLERSDGTVLAPIVKYGDFYWVSKKYLLPSNISVPTINNVHTSESTRKYPYPFIHRMLAHANAQTIRYSLKNNTITYFNESDVDWSSAIDYQCPDCLIGKSTKHRHIKGSRLKYQNSYEPFQYLHTDIFGPVHNLPNSAPSYFISFTDETTKFRWVYPLHDRREDSILDVFTTILAFIKNQFQASVLVIQMDRGSEYTNRTLHKFLEKNGITPCYTTTADSRAHGVAERLNRTLLDDCRTQLQCSGLPNHLWFSAIEFSTIVRNSLASPKSKKSARQHAGLAGLDISTLLPFGQPVIVNDHNPNSKIHPRGIPGYALHPSRNSYGYIIYLPSLKKTVDTTNYVILQGKESRLDQFNYDALTFDEDLNRLTASYHSFIASNEIQESNDLNIESDHDFQSDIELHPEQPRNVLSKAVSPTDSTPPSTHTEDSKRVSKTNIRAPREVDPNISESNILPSKKRSSTPQISNIESTGSGGMHKLNVPLLAPMSQSNTHESSHASKSKDFRHSDSYSENETNHTNVPISSTGGTNNKTVPQISDQETEKRIIHRSPSIDASPPENNSSHNIVPIKTPTTVSEQNTEESIIADLPLPDLPPESPTEFPDPFKELPPINSRQTNSSLGGIGDSNAYTTINSKKRSLEDNETEIKVSRDTWNTKNMRSLEPPRSKKRIHLIAAVKAVKSIKPIRTTLRYDEAITYNKDIKEKEKYIEAYHKEVNQLLKMKTWDTDEYYDRKEIDPKRVINSMFIFNKKRDGTHKARFVARGDIQHPDTYDSGMQSNTVHHYALMTSLSLALDNNYYITQLDISSAYLYADIKEELYIRPPPHLGMNDKLIRLKKSLYGLKQSGANWYETIKSYLIQQCGMEEVRGWSCVFKNSQVTICLFVDDMVLFSKNLNSNKRIIEKLKMQYDTKIINLGESDEEIQYDILGLEIKYQRGKYMKLGMENSLTEKIPKLNVPLNPKGRKLSAPGQPGLYIDQDELEIDEDEYKEKVHEMQKLIGLASYVGYKFRFDLLYYINTLAQHILFPSRQVLDMTYELIQFMWDTRDKQLIWHKNKPTEPDNKLVAISDASYGNQPYYKSQIGNIYLLNGKVIGGKSTKASLTCTSTTEAEIHAISESVPLLNNLSYLIQELNKKPIIKGLLTDSRSTISIIKSTNEEKFRNRFFGTKAMRLRDEVSGNNLYVYYIETKKNIADVMTKPLPIKTFKLLTNKWIH.

Polar residues-rich tracts occupy residues 1–23 (MESQ…SVTS), 48–60 (TKAN…TPAS), and 127–152 (QSQF…GNTF). 3 disordered regions span residues 1 to 93 (MESQ…MMTQ), 126 to 173 (PQSQ…RPPP), and 352 to 421 (GSRN…SKST). Residues 153-165 (TDSSSADSDMTST) are compositionally biased toward low complexity. Residues 299–401 (NNGIHINNKV…NSKSKTARAH (103 aa)) are RNA-binding. A compositionally biased stretch (low complexity) spans 402-418 (NVSTSNNSPSTDNDSIS). Serine 416 carries the post-translational modification Phosphoserine. Residue aspartate 461 is the For protease activity; shared with dimeric partner of the active site. Residues 583–640 (NVHTSESTRKYPYPFIHRMLAHANAQTIRYSLKNNTITYFNESDVDWSSAIDYQCPDC) are integrase-type zinc finger-like. Positions 660 to 835 (NSYEPFQYLH…AGLDISTLLP (176 aa)) constitute an Integrase catalytic domain. 2 residues coordinate Mg(2+): aspartate 671 and aspartate 736. Disordered stretches follow at residues 956 to 1087 (SKAV…ETEK), 1092 to 1111 (RSPS…NIVP), and 1130 to 1187 (DLPL…DNET). The span at 960–969 (SPTDSTPPST) shows a compositional bias: low complexity. Positions 1005–1015 (STPQISNIEST) are enriched in polar residues. Basic and acidic residues predominate over residues 1038–1053 (ESSHASKSKDFRHSDS). Polar residues-rich tracts occupy residues 1054–1082 (YSEN…QISD) and 1101–1111 (PENNSSHNIVP). The short motif at 1178-1212 (KKRSLEDNETEIKVSRDTWNTKNMRSLEPPRSKKR) is the Bipartite nuclear localization signal element. The 139-residue stretch at 1338–1476 (NNYYITQLDI…DILGLEIKYQ (139 aa)) folds into the Reverse transcriptase Ty1/copia-type domain. Residues aspartate 1346, aspartate 1427, aspartate 1428, aspartate 1610, glutamate 1652, and aspartate 1685 each coordinate Mg(2+). Residues 1610–1752 (DASYGNQPYY…IKTFKLLTNK (143 aa)) enclose the RNase H Ty1/copia-type domain.

In terms of assembly, the capsid protein forms a homotrimer, from which the VLPs are assembled. The protease is a homodimer, whose active site consists of two apposed aspartic acid residues. In terms of processing, initially, virus-like particles (VLPs) are composed of the structural unprocessed proteins Gag and Gag-Pol, and also contain the host initiator methionine tRNA (tRNA(i)-Met) which serves as a primer for minus-strand DNA synthesis, and a dimer of genomic Ty RNA. Processing of the polyproteins occurs within the particle and proceeds by an ordered pathway, called maturation. First, the protease (PR) is released by autocatalytic cleavage of the Gag-Pol polyprotein yielding capsid protein p45 and a Pol-p154 precursor protein. This cleavage is a prerequisite for subsequent processing of Pol-p154 at the remaining sites to release the mature structural and catalytic proteins. Maturation takes place prior to the RT reaction and is required to produce transposition-competent VLPs.

It is found in the cytoplasm. The protein resides in the nucleus. The catalysed reaction is DNA(n) + a 2'-deoxyribonucleoside 5'-triphosphate = DNA(n+1) + diphosphate. It catalyses the reaction Endonucleolytic cleavage to 5'-phosphomonoester.. Its function is as follows. Capsid protein (CA) is the structural component of the virus-like particle (VLP), forming the shell that encapsulates the retrotransposons dimeric RNA genome. The particles are assembled from trimer-clustered units and there are holes in the capsid shells that allow for the diffusion of macromolecules. CA also has nucleocapsid-like chaperone activity, promoting primer tRNA(i)-Met annealing to the multipartite primer-binding site (PBS), dimerization of Ty1 RNA and initiation of reverse transcription. Functionally, the aspartyl protease (PR) mediates the proteolytic cleavages of the Gag and Gag-Pol polyproteins after assembly of the VLP. In terms of biological role, reverse transcriptase/ribonuclease H (RT) is a multifunctional enzyme that catalyzes the conversion of the retro-elements RNA genome into dsDNA within the VLP. The enzyme displays a DNA polymerase activity that can copy either DNA or RNA templates, and a ribonuclease H (RNase H) activity that cleaves the RNA strand of RNA-DNA heteroduplexes during plus-strand synthesis and hydrolyzes RNA primers. The conversion leads to a linear dsDNA copy of the retrotransposon that includes long terminal repeats (LTRs) at both ends. Integrase (IN) targets the VLP to the nucleus, where a subparticle preintegration complex (PIC) containing at least integrase and the newly synthesized dsDNA copy of the retrotransposon must transit the nuclear membrane. Once in the nucleus, integrase performs the integration of the dsDNA into the host genome. The chain is Transposon TyH3 Gag-Pol polyprotein (TY1B) from Saccharomyces cerevisiae (Baker's yeast).